A 572-amino-acid chain; its full sequence is Proline--tRNA ligase (572 aa).

It belongs to the class-II aminoacyl-tRNA synthetase family. ProS type 1 subfamily. In terms of assembly, homodimer.

The protein resides in the cytoplasm. The enzyme catalyses tRNA(Pro) + L-proline + ATP = L-prolyl-tRNA(Pro) + AMP + diphosphate. Functionally, catalyzes the attachment of proline to tRNA(Pro) in a two-step reaction: proline is first activated by ATP to form Pro-AMP and then transferred to the acceptor end of tRNA(Pro). As ProRS can inadvertently accommodate and process non-cognate amino acids such as alanine and cysteine, to avoid such errors it has two additional distinct editing activities against alanine. One activity is designated as 'pretransfer' editing and involves the tRNA(Pro)-independent hydrolysis of activated Ala-AMP. The other activity is designated 'posttransfer' editing and involves deacylation of mischarged Ala-tRNA(Pro). The misacylated Cys-tRNA(Pro) is not edited by ProRS. The sequence is that of Proline--tRNA ligase from Haemophilus influenzae (strain PittGG).